Consider the following 237-residue polypeptide: Large ribosomal subunit protein uL22m (237 aa).

The protein belongs to the universal ribosomal protein uL22 family.

The protein localises to the mitochondrion. This Dictyostelium discoideum (Social amoeba) protein is Large ribosomal subunit protein uL22m (mrpl22).